The sequence spans 123 residues: Undecaprenol kinase (123 aa).

Residues 1–33 (MDSKDHRNELNRFFKSFVHAGRGIWETARTERN) lie on the Cytoplasmic side of the membrane. A helical transmembrane segment spans residues 34–51 (FQFHAAAACAVLICGFLV). Residues 52-57 (ELSIIE) lie on the Extracellular side of the membrane. Residues 58–74 (WMIIFLLIGGMFSLELL) form a helical membrane-spanning segment. The Cytoplasmic segment spans residues 75 to 99 (NTAIEHTVDLITDKHHPLAKAAKDA). A helical membrane pass occupies residues 100–120 (AAGAVCVFAVISCIIGLLIFL). The Extracellular segment spans residues 121–123 (PKL).

This sequence belongs to the bacterial diacylglycerol kinase family.

Its subcellular location is the cell membrane. It catalyses the reaction di-trans,octa-cis-undecaprenol + ATP = di-trans,octa-cis-undecaprenyl phosphate + ADP + H(+). In terms of biological role, catalyzes the phosphorylation of undecaprenol in vitro, which is probably the physiological substrate. Exhibits no detectable activity against other substrates such as monoacylglycerol, ceramide, or diacylglycerol (DAG). Appears indispensable for the maintenance of spore stability and viability in B.subtilis. In Bacillus subtilis (strain 168), this protein is Undecaprenol kinase (dgkA).